A 530-amino-acid polypeptide reads, in one-letter code: Vesicular acetylcholine transporter (530 aa).

Topologically, residues 1 to 33 (MEPTAPTGQARAAATKLSEAVGAALQEPQRQRR) are cytoplasmic. Residues 34 to 54 (LVLVIVCVALLLDNMLYMVIV) form a helical membrane-spanning segment. Topologically, residues 55–125 (PIVPDYIAHM…PTESEDVKIG (71 aa)) are lumenal, vesicle. N-linked (GlcNAc...) asparagine glycosylation is found at asparagine 89 and asparagine 96. A helical transmembrane segment spans residues 126-146 (VLFASKAILQLLVNPLSGPFI). Residues 147–152 (DRMSYD) lie on the Cytoplasmic side of the membrane. A helical transmembrane segment spans residues 153-173 (VPLLIGLGVMFASTVMFAFAE). Over 174–182 (DYATFFAAR) the chain is Lumenal, vesicle. A helical membrane pass occupies residues 183–203 (SLQGLGSAFADTSGIAMIADK). Residues 204–213 (YPEEPERSRA) are Cytoplasmic-facing. Residues 214-234 (LGVALAFISFGSLVAPPFGGI) traverse the membrane as a helical segment. Residues 235–242 (LYEFAGKR) lie on the Lumenal, vesicle side of the membrane. A helical membrane pass occupies residues 243–263 (VPFLVLAAVSLFDALLLLAVA). Residues 264 to 288 (KPFSAAARARANLPVGTPIHRLMLD) are Cytoplasmic-facing. Residues 289–309 (PYIAVVAGALTTCNIPLAFLE) traverse the membrane as a helical segment. At 310 to 325 (PTIATWMKHTMAASEW) the chain is on the lumenal, vesicle side. Residues 326–346 (EMGMVWLPAFVPHVLGVYLTV) traverse the membrane as a helical segment. Residues 347 to 356 (RLAARYPHLQ) are Cytoplasmic-facing. A helical transmembrane segment spans residues 357–377 (WLYGALGLAVIGVSSCVVPAC). Residues 378–388 (RSFAPLVVSLC) lie on the Lumenal, vesicle side of the membrane. Residues 389–409 (GLCFGIALVDTALLPTLAFLV) traverse the membrane as a helical segment. Topologically, residues 410-422 (DVRHVSVYGSVYA) are cytoplasmic. Residues 423–443 (IADISYSVAYALGPIVAGHIV) form a helical membrane-spanning segment. Topologically, residues 444–447 (HSLG) are lumenal, vesicle. A helical transmembrane segment spans residues 448 to 468 (FEQLSLGMGLANLLYAPVLLL). The Cytoplasmic portion of the chain corresponds to 469–530 (LRNVGLLTRS…EDDYNYYSRS (62 aa)). Residues 471-530 (NVGLLTRSRSERDVLLDEPPQGLYDAVRLREVQGKDGGEPCSPPGPFDGCEDDYNYYSRS) form a mediates interaction with SEC14L1 region. Positions 504-530 (GKDGGEPCSPPGPFDGCEDDYNYYSRS) are disordered.

The protein belongs to the major facilitator superfamily. Vesicular transporter family. As to quaternary structure, interacts with SEC14L1. Expressed in the spinal cord, brain (excluding the cerebellum), brain stem and cholinergic tissues. Not expressed in peripheral tissues such as liver and kidney.

It is found in the cytoplasmic vesicle. Its subcellular location is the secretory vesicle. It localises to the synaptic vesicle membrane. It carries out the reaction acetylcholine(out) + 2 H(+)(in) = acetylcholine(in) + 2 H(+)(out). The catalysed reaction is choline(in) + 2 H(+)(out) = choline(out) + 2 H(+)(in). It catalyses the reaction serotonin(in) + 2 H(+)(out) = serotonin(out) + 2 H(+)(in). Electrogenic antiporter that exchanges one cholinergic neurotransmitter, acetylcholine or choline, with two intravesicular protons across the membrane of synaptic vesicles. Uses the electrochemical proton gradient established by the V-type proton-pump ATPase to store neurotransmitters inside the vesicles prior to their release via exocytosis. Determines cholinergic vesicular quantal size at presynaptic nerve terminals in developing neuro-muscular junctions with an impact on motor neuron differentiation and innervation pattern. Part of forebrain cholinergic system, regulates hippocampal synapse transmissions that underlie spatial memory formation. Can transport serotonin. This chain is Vesicular acetylcholine transporter (Slc18a3), found in Mus musculus (Mouse).